The primary structure comprises 257 residues: AN1-type zinc finger protein 2B (257 aa).

2 consecutive AN1-type zinc fingers follow at residues 4-52 and 94-142; these read PDLG…QKDI and KIFT…HQTS. Cys-10, Cys-15, Cys-25, Cys-28, Cys-33, His-36, His-42, Cys-44, Cys-100, Cys-105, Cys-115, Cys-118, Cys-123, His-126, His-132, and Cys-134 together coordinate Zn(2+). A VCP/p97-interacting motif (VIM) region spans residues 141 to 151; that stretch reads TSRAGLAAISR. Residues 152–184 are disordered; that stretch reads AQGLASTSTAPSPSRTLPSSSSPSRATPQLPTR. The span at 155–179 shows a compositional bias: low complexity; sequence LASTSTAPSPSRTLPSSSSPSRATP. Ser-163, Ser-173, and Ser-187 each carry phosphoserine; by MAPK14. UIM domains follow at residues 197–216 and 221–240; these read SEDEALQRALELSLAEAKPQ and QEEDDLALAQALSASEAEYQ. Position 254 is a cysteine methyl ester (Cys-254). Cys-254 carries S-geranylgeranyl cysteine lipidation. Positions 254–257 match the CAAX motif motif; sequence CSLC. A propeptide spans 255–257 (removed in mature form); that stretch reads SLC.

Binds 'Lys-48'-linked polyubiquitin chains of ubiquitinated proteins. Associates with the proteasome complex; upon exposure to arsenite. Interacts (via VIM motif) with VCP; the interaction is direct. Interacts with BAG6. Interacts with IGF1R (nascent precursor form). Interacts with DERL1, FAF2, NPLOC4 and UFD1; probably through VCP. Phosphorylated by MAPK14. Phosphorylation has no effect on association with the proteasome complex.

It is found in the endoplasmic reticulum membrane. Plays a role in protein homeostasis by regulating both the translocation and the ubiquitin-mediated proteasomal degradation of nascent proteins at the endoplasmic reticulum. It is involved in the regulation of signal-mediated translocation of proteins into the endoplasmic reticulum. It also plays a role in the ubiquitin-mediated proteasomal degradation of proteins for which signal-mediated translocation to the endoplasmic reticulum has failed. May therefore function in the endoplasmic reticulum stress-induced pre-emptive quality control, a mechanism that selectively attenuates the translocation of newly synthesized proteins into the endoplasmic reticulum and reroutes them to the cytosol for proteasomal degradation. By controlling the steady-state expression of the IGF1R receptor, indirectly regulates the insulin-like growth factor receptor signaling pathway. The protein is AN1-type zinc finger protein 2B of Mus musculus (Mouse).